The primary structure comprises 492 residues: MSNRDSSEHGDSSNKIASNECNEATKLGFNFTQLWSQITTTYSLIDRNDSNMFNRDERVESEQEKKSVVILGKKYDDISVDDGVIEQDIYSKIWLTYRTGFEPIAKCLDGPQPLSFVQSMVFNRNPISSTFNNFHGLLDNDNFTTDVGWGCMIRTSQALLANTYQLLFLGRGFSYGRDRSPRHDEIIDMFMDEPRAPFSLHNFIKVASESPLKVKPGQWFGPNAASLSIKRLCDNVYESNGTGRVKVVISESSNLYDDIITQMFTTLNPVPDAILVLLPVRLGIDKVNPLYHASVLELLALRQSVGIAGGKPSSSFYFFGYKGNDLLYLDPHYPQFVRNKTSVYDTYHTNSYQKLSVDDMDPSMMIGILIKDINDYEDFKSSCTKSSNKILHFHPTSEKADRRGSLSEFKRKNSEFVCIESKDVQRREDFITIDNVSRDDLNNMEGFIDMADEFDSEIDQNNKDDNFDDDEPVNVSQTSIGEEYTSTAGSRP.

The active-site Nucleophile is cysteine 151. Catalysis depends on residues aspartate 330 and histidine 332. A disordered region spans residues 454 to 492; that stretch reads FDSEIDQNNKDDNFDDDEPVNVSQTSIGEEYTSTAGSRP. A compositionally biased stretch (polar residues) spans 474–492; sequence NVSQTSIGEEYTSTAGSRP.

Belongs to the peptidase C54 family.

The protein resides in the cytoplasm. Its subcellular location is the nucleus. It localises to the preautophagosomal structure. The enzyme catalyses [protein]-C-terminal L-amino acid-glycyl-phosphatidylethanolamide + H2O = [protein]-C-terminal L-amino acid-glycine + a 1,2-diacyl-sn-glycero-3-phosphoethanolamine. Cysteine protease that plays a key role in cytoplasm to vacuole transport (Cvt) and autophagy by mediating both proteolytic activation and delipidation of ATG8. Required for selective autophagic degradation of the nucleus (nucleophagy) as well as for mitophagy which contributes to regulate mitochondrial quantity and quality by eliminating the mitochondria to a basal level to fulfill cellular energy requirements and preventing excess ROS production. The protease activity is required for proteolytic activation of ATG8: cleaves the C-terminal amino acid of ATG8 to reveal a C-terminal glycine. ATG8 ubiquitin-like activity requires the exposure of the glycine at the C-terminus for its conjugation to phosphatidylethanolamine (PE) and its insertion to membranes, which is necessary for autophagy. The ATG8-PE conjugate mediates tethering between adjacent membranes and stimulates membrane hemifusion, leading to expansion of the autophagosomal membrane during autophagy. In addition to the protease activity, also catalyzes deconjugation of PE-conjugated forms of ATG8 during macroautophagy: ATG8 delipidation is required to release the protein from membranes, which facilitates multiple events during macroautophagy, and especially for efficient autophagosome biogenesis, the assembly of ATG9-containing tubulovesicular clusters into phagophores/autophagosomes, and for the disassembly of PAS-associated ATG components. ATG8 delipidation by ATG4 also recycles ATG8-PE generated on inappropriate membranes to maintain a reservoir of unlipidated ATG8 that is required for autophagosome formation at the PAS. The sequence is that of Probable cysteine protease ATG4 (ATG4) from Debaryomyces hansenii (strain ATCC 36239 / CBS 767 / BCRC 21394 / JCM 1990 / NBRC 0083 / IGC 2968) (Yeast).